Here is a 387-residue protein sequence, read N- to C-terminus: MSNGAFDAIFEYAWGQIDKPISGDFIYGKDLPKLIEIIENIFQKAQKSGSYELRLPLFSEINKDLFRTFSNTKTFFKIHKEEFDDIFFNLVNHPLREILENAFIGVDSIPSDFIVSMNLNSPSKFLVENKNKNTEGAGISTPRKKLTESPIKLLSRNNIGKALEVQVEELKRELTAKQSLLQENERQVSELKIRLETYQEKYASIQQRFSDLQKARQVEDNQNSSRTSDPGSPLVTGIDQKAILEEFRRRLQRQTDTISFLKDQIRRERGLNCSNDKVSHSKRKHATTDGDGTFKNFISAVPSNIWVKATIRIIVCFALLAGVLPYIRKYVYAHDTPSQNSRLQLSWWENSGILSKIVWFFEDQTDLETEYRSNANVDDAYSRVFGI.

Residues 117–232 (MNLNSPSKFL…NSSRTSDPGS (116 aa)) are a coiled coil. Residues 216–235 (RQVEDNQNSSRTSDPGSPLV) are disordered. The span at 220–230 (DNQNSSRTSDP) shows a compositional bias: polar residues. The helical transmembrane segment at 311 to 327 (IRIIVCFALLAGVLPYI) threads the bilayer.

It belongs to the MPS2 family. As to quaternary structure, interacts with BBP1, MPS3, and SPC24.

The protein localises to the nucleus membrane. It is found in the cytoplasm. Its subcellular location is the cytoskeleton. The protein resides in the microtubule organizing center. It localises to the spindle pole body. Its function is as follows. Component of the spindle pole body (SPB) required for insertion of the nascent SPB into the nuclear envelope and for the proper execution of spindle pole body (SPB) duplication. This is Monopolar spindle protein 2 (MPS2) from Saccharomyces cerevisiae (strain ATCC 204508 / S288c) (Baker's yeast).